We begin with the raw amino-acid sequence, 173 residues long: Flavodoxin (173 aa).

In terms of domain architecture, Flavodoxin-like spans 2–168 (IGIFFSTSTG…RVAGWVEAVV (167 aa)).

The protein belongs to the flavodoxin family. It depends on FMN as a cofactor.

Its function is as follows. Low-potential electron donor to a number of redox enzymes. The chain is Flavodoxin from Chondrus crispus (Carrageen Irish moss).